Here is a 465-residue protein sequence, read N- to C-terminus: Argininosuccinate lyase (465 aa).

It belongs to the lyase 1 family. Argininosuccinate lyase subfamily.

The protein localises to the cytoplasm. It carries out the reaction 2-(N(omega)-L-arginino)succinate = fumarate + L-arginine. The protein operates within amino-acid biosynthesis; L-arginine biosynthesis; L-arginine from L-ornithine and carbamoyl phosphate: step 3/3. The sequence is that of Argininosuccinate lyase from Rhodopseudomonas palustris (strain BisB5).